Consider the following 974-residue polypeptide: Mediator of RNA polymerase II transcription subunit 16 (974 aa).

The disordered stretch occupies residues 62–92; that stretch reads ESSSTLSTHSTTTSVNGSTTAGVGSTPNFGG. The segment covering 63–75 has biased composition (low complexity); that stretch reads SSSTLSTHSTTTS. Residues 76 to 92 are compositionally biased toward polar residues; sequence VNGSTTAGVGSTPNFGG. Residues 889 to 893 carry the Nuclear localization signal motif; sequence KLPIK.

This sequence belongs to the Mediator complex subunit 16 family. As to quaternary structure, component of the Mediator complex, which is composed of at least 21 subunits that form three structurally distinct submodules. The Mediator head module contains MED6, MED8, MED11, SRB4/MED17, SRB5/MED18, ROX3/MED19, SRB2/MED20 and SRB6/MED22, the middle module contains MED1, MED4, NUT1/MED5, MED7, CSE2/MED9, NUT2/MED10, SRB7/MED21 and SOH1/MED31, and the tail module contains MED2, PGD1/MED3, RGR1/MED14, GAL11/MED15 and SIN4/MED16. The head and the middle modules interact directly with RNA polymerase II, whereas the elongated tail module interacts with gene-specific regulatory proteins. Interacts with HOG1. Phosphorylated by KIN28.

It localises to the nucleus. Functionally, component of the Mediator complex, a coactivator involved in the regulated transcription of nearly all RNA polymerase II-dependent genes. Mediator functions as a bridge to convey information from gene-specific regulatory proteins to the basal RNA polymerase II transcription machinery. The Mediator complex, having a compact conformation in its free form, is recruited to promoters by direct interactions with regulatory proteins and serves for the assembly of a functional preinitiation complex with RNA polymerase II and the general transcription factors. The Mediator complex unfolds to an extended conformation and partially surrounds RNA polymerase II, specifically interacting with the unphosphorylated form of the C-terminal domain (CTD) of RNA polymerase II. The Mediator complex dissociates from the RNA polymerase II holoenzyme and stays at the promoter when transcriptional elongation begins. This is Mediator of RNA polymerase II transcription subunit 16 (SIN4) from Saccharomyces cerevisiae (strain ATCC 204508 / S288c) (Baker's yeast).